A 686-amino-acid chain; its full sequence is WD repeat-containing protein 93 (686 aa).

Over residues M1–Q10 the composition is skewed to polar residues. The segment at M1–D40 is disordered. Over residues T29–D40 the composition is skewed to basic and acidic residues. The WD repeat unit spans residues P410–V449.

The polypeptide is WD repeat-containing protein 93 (WDR93) (Homo sapiens (Human)).